A 283-amino-acid chain; its full sequence is MADRGPWRVGVVGYGRLGQSLVSRLLAQGPELGLELVFVWNRDPGRMAGSVPPSLQLQNLAALGERRPDLVVEVAHPKIIHESGAQILRHANLLVGSPSALSDQTTERQLLEASQHWDHAVFVARGALWGAEDIRRLDAAGGLRSLRVTMATHPDGFRLEGPLAAAHSPGPCTVLYEGPVRGLCPFAPRNSNTMAAAALAAPSLGFDGVIGVLVADTSLTDMHVVDVELSGPRGPTGRSFAVHTRRENPAEPGAVTGSATVTAFWQSLLACCQLPSRPGIHLC.

A phosphoserine mark is found at Ser20 and Ser168.

The protein belongs to the L-aspartate dehydrogenase family.

The polypeptide is Aspartate dehydrogenase domain-containing protein (Homo sapiens (Human)).